Reading from the N-terminus, the 157-residue chain is Ubiquitin-like protein 4A (157 aa).

Residues M1 to K76 enclose the Ubiquitin-like domain. Residue K48 forms a Glycyl lysine isopeptide (Lys-Gly) (interchain with G-Cter in ubiquitin) linkage. Position 90 is a phosphoserine (S90). Residues W96–L138 form a required and sufficient for interaction with BAG6 region.

In terms of assembly, component of the BAG6/BAT3 complex, at least composed of BAG6, UBL4A and GET4/TRC35. Interacts with BAG6; the interaction is direct and required for UBL4A protein stability. Interacts with USP13; may be indirect via BAG6. Post-translationally, polyubiquitinated. Ubiquitination by AMFR and deubiquitination by USP13 may regulate the interaction between the BAG6/BAT complex and SGTA and therefore may regulate client proteins fate.

It is found in the cytoplasm. Its subcellular location is the cytosol. The protein resides in the nucleus. As part of a cytosolic protein quality control complex, the BAG6/BAT3 complex, maintains misfolded and hydrophobic patches-containing proteins in a soluble state and participates in their proper delivery to the endoplasmic reticulum or alternatively can promote their sorting to the proteasome where they undergo degradation. The BAG6/BAT3 complex is involved in the post-translational delivery of tail-anchored/type II transmembrane proteins to the endoplasmic reticulum membrane. Recruited to ribosomes, it interacts with the transmembrane region of newly synthesized tail-anchored proteins and together with SGTA and ASNA1 mediates their delivery to the endoplasmic reticulum. Client proteins that cannot be properly delivered to the endoplasmic reticulum are ubiquitinated and sorted to the proteasome. Similarly, the BAG6/BAT3 complex also functions as a sorting platform for proteins of the secretory pathway that are mislocalized to the cytosol either delivering them to the proteasome for degradation or to the endoplasmic reticulum. The BAG6/BAT3 complex also plays a role in the endoplasmic reticulum-associated degradation (ERAD), a quality control mechanism that eliminates unwanted proteins of the endoplasmic reticulum through their retrotranslocation to the cytosol and their targeting to the proteasome. It maintains these retrotranslocated proteins in an unfolded yet soluble state condition in the cytosol to ensure their proper delivery to the proteasome. The chain is Ubiquitin-like protein 4A (UBL4A) from Callithrix jacchus (White-tufted-ear marmoset).